Consider the following 107-residue polypeptide: uncharacterized protein (107 aa).

This is an uncharacterized protein from Dictyostelium discoideum (Social amoeba).